Reading from the N-terminus, the 334-residue chain is HTH-type transcriptional repressor PurR (334 aa).

The region spanning 2 to 56 (ATIKDVARLAGVSTTTVSHVINKTRFVAEATQEKVMKAVDELNYAPSAVARSLKC) is the HTH lacI-type domain. Residues 4–23 (IKDVARLAGVSTTTVSHVIN) constitute a DNA-binding region (H-T-H motif). A DNA-binding region spans residues 48-56 (SAVARSLKC). Hypoxanthine-binding residues include F73, K189, F220, and D274.

As to quaternary structure, homodimer.

The protein operates within purine metabolism; purine nucleotide biosynthesis [regulation]. Functionally, is the main repressor of the genes involved in the de novo synthesis of purine nucleotides, regulating purB, purC, purEK, purF, purHD, purL, purMN and guaBA expression. PurR is allosterically activated to bind its cognate DNA by binding the purine corepressors, hypoxanthine or guanine, thereby effecting transcription repression. This chain is HTH-type transcriptional repressor PurR, found in Vibrio parahaemolyticus serotype O3:K6 (strain RIMD 2210633).